A 100-amino-acid polypeptide reads, in one-letter code: NADH-quinone oxidoreductase subunit K (100 aa).

3 consecutive transmembrane segments (helical) span residues 1–21 (MIGL…GLAG), 28–48 (ILLL…GFVA), and 64–84 (FIIA…ILWF).

Belongs to the complex I subunit 4L family. As to quaternary structure, NDH-1 is composed of 14 different subunits. Subunits NuoA, H, J, K, L, M, N constitute the membrane sector of the complex.

It localises to the cell inner membrane. It catalyses the reaction a quinone + NADH + 5 H(+)(in) = a quinol + NAD(+) + 4 H(+)(out). NDH-1 shuttles electrons from NADH, via FMN and iron-sulfur (Fe-S) centers, to quinones in the respiratory chain. The immediate electron acceptor for the enzyme in this species is believed to be ubiquinone. Couples the redox reaction to proton translocation (for every two electrons transferred, four hydrogen ions are translocated across the cytoplasmic membrane), and thus conserves the redox energy in a proton gradient. This is NADH-quinone oxidoreductase subunit K from Helicobacter pylori (strain P12).